Reading from the N-terminus, the 485-residue chain is UDP-N-acetylmuramate--L-alanine ligase (485 aa).

125 to 131 (GTHGKTT) serves as a coordination point for ATP.

This sequence belongs to the MurCDEF family.

It is found in the cytoplasm. The enzyme catalyses UDP-N-acetyl-alpha-D-muramate + L-alanine + ATP = UDP-N-acetyl-alpha-D-muramoyl-L-alanine + ADP + phosphate + H(+). The protein operates within cell wall biogenesis; peptidoglycan biosynthesis. In terms of biological role, cell wall formation. This is UDP-N-acetylmuramate--L-alanine ligase from Stutzerimonas stutzeri (strain A1501) (Pseudomonas stutzeri).